Reading from the N-terminus, the 142-residue chain is Large ribosomal subunit protein uL13 (142 aa).

It belongs to the universal ribosomal protein uL13 family. As to quaternary structure, part of the 50S ribosomal subunit.

In terms of biological role, this protein is one of the early assembly proteins of the 50S ribosomal subunit, although it is not seen to bind rRNA by itself. It is important during the early stages of 50S assembly. The chain is Large ribosomal subunit protein uL13 from Delftia acidovorans (strain DSM 14801 / SPH-1).